Reading from the N-terminus, the 878-residue chain is E3 ubiquitin-protein ligase BRE1-like 1 (878 aa).

Positions Met-1–Glu-21 are disordered. 4 coiled-coil regions span residues Gln-48–Lys-76, Gln-200–Gln-261, Ser-293–Gln-382, and Leu-537–Ser-624. The RING-type zinc-finger motif lies at Cys-826–Ser-865.

It belongs to the BRE1 family. In terms of assembly, may act as a tetramer consisting of two copies of HUB1 and two copies of HUB2. Interacts with MED21. Ubiquitously expressed.

The protein localises to the nucleus. It catalyses the reaction S-ubiquitinyl-[E2 ubiquitin-conjugating enzyme]-L-cysteine + [acceptor protein]-L-lysine = [E2 ubiquitin-conjugating enzyme]-L-cysteine + N(6)-ubiquitinyl-[acceptor protein]-L-lysine.. The protein operates within protein modification; protein ubiquitination. Functionally, E3 ubiquitin-protein ligase that monoubiquitinates H2B to form H2BK143ub1. H2BK143ub1 gives a specific tag for epigenetic transcriptional activation and is also prerequisite for H3K4me and maybe H3K79me. It thereby plays a central role in histone code and gene regulation. Forms a ubiquitin ligase complex in cooperation with the E2 enzyme UBC2/RAD6. Required for the regulation of flowering time and defense against necrotrophic fungal pathogens. Involved in the control of seed dormancy and germination. This Arabidopsis thaliana (Mouse-ear cress) protein is E3 ubiquitin-protein ligase BRE1-like 1 (HUB1).